A 2243-amino-acid chain; its full sequence is Zinc finger FYVE domain-containing protein 26 homolog (2243 aa).

2 disordered regions span residues 386–416 (SQRK…RPTA) and 514–556 (KKKA…GKAS). Over residues 393 to 408 (GENDEEDDEQYVDDDV) the composition is skewed to acidic residues. Y403 carries the phosphotyrosine modification. The segment covering 517-528 (ASSDDESRERSN) has biased composition (basic and acidic residues). Basic residues predominate over residues 534-543 (NRRKARRQRR). Residues 617-644 (KKIIETFHLEHSQLNRELHFMEQQQLVK) form an LRR 1 repeat. S1424 carries the phosphoserine modification. The FYVE-type zinc-finger motif lies at 1444-1500 (DEEASHCMCCRRAAFTMLMRRHHCRRCGRVVCYACSTHRIRIPELYDELEVRICNDC). Zn(2+)-binding residues include C1450, C1453, C1467, C1470, C1475, C1478, C1497, and C1500. The disordered stretch occupies residues 1505-1534 (TPAKDQGDGTSSERSAISGQVSKSSGRSDS). Over residues 1512–1534 (DGTSSERSAISGQVSKSSGRSDS) the composition is skewed to polar residues. Residues 1887 to 1912 (YPQLANGGLNVLMDELQQLDDAQFTA) form an LRR 2 repeat.

This sequence belongs to the ZFYVE26 family.

Its function is as follows. Phosphatidylinositol 3-phosphate (PtdIns[3]P)-binding protein. Involved in autophagy. This Drosophila melanogaster (Fruit fly) protein is Zinc finger FYVE domain-containing protein 26 homolog.